Consider the following 235-residue polypeptide: uncharacterized protein (235 aa).

This is an uncharacterized protein from Bacillus subtilis (strain 168).